Reading from the N-terminus, the 150-residue chain is UPF0756 membrane protein ABAYE1440 (150 aa).

The next 4 helical transmembrane spans lie at 1–21, 45–65, 83–103, and 115–135; these read MLAQ…CGLL, FFPY…TIGV, FISF…WLGG, and VVAG…GVPV.

Belongs to the UPF0756 family.

The protein resides in the cell membrane. This Acinetobacter baumannii (strain AYE) protein is UPF0756 membrane protein ABAYE1440.